The following is a 358-amino-acid chain: DNA polymerase IV (358 aa).

In terms of domain architecture, UmuC spans 4 to 185 (IIHIDMDCYF…LSLRKIPGVG (182 aa)). 2 residues coordinate Mg(2+): Asp-8 and Asp-103. Glu-104 is a catalytic residue.

Belongs to the DNA polymerase type-Y family. In terms of assembly, monomer. Requires Mg(2+) as cofactor.

The protein resides in the cytoplasm. It catalyses the reaction DNA(n) + a 2'-deoxyribonucleoside 5'-triphosphate = DNA(n+1) + diphosphate. Poorly processive, error-prone DNA polymerase involved in untargeted mutagenesis. Copies undamaged DNA at stalled replication forks, which arise in vivo from mismatched or misaligned primer ends. These misaligned primers can be extended by PolIV. Exhibits no 3'-5' exonuclease (proofreading) activity. May be involved in translesional synthesis, in conjunction with the beta clamp from PolIII. In Shewanella sp. (strain W3-18-1), this protein is DNA polymerase IV.